A 146-amino-acid polypeptide reads, in one-letter code: Leghemoglobin alpha (146 aa).

In terms of domain architecture, Globin spans 3 to 146; it reads AFTEKQEALV…LAAAIKKAYA (144 aa). Tyr-26 and Tyr-31 each carry nitrated tyrosine. Ser-46 contributes to the heme b binding site. Ser-46 carries the post-translational modification Phosphoserine. His-62 serves as a coordination point for O2. The heme b site is built by His-93 and Lys-96. Position 134 is a nitrated tyrosine (Tyr-134).

It belongs to the plant globin family. In terms of assembly, monomer. Nitrated mainly at Tyr-31 and, to a lower extent, at Tyr-26 and Tyr-134, in effective nodules and particularly in hypoxic conditions; this mechanism may play a protective role in the symbiosis by buffering toxic peroxynitrite NO(2)(-). Nitration level decrease during nodule senescence. Post-translationally, phosphorylation at Ser-46 disrupts the molecular environment of its porphyrin ring oxygen binding pocket, thus leading to a reduced oxygen consumption and to the delivery of oxygen O(2) to symbiosomes. Root nodules.

The protein resides in the cytoplasm. The protein localises to the cytosol. It localises to the nucleus. In terms of biological role, leghemoglobin that reversibly binds oxygen O(2) through a pentacoordinated heme iron. In root nodules, facilitates the diffusion of oxygen to the bacteroids while preventing the bacterial nitrogenase from being inactivated by buffering dioxygen, nitric oxide and carbon monoxide, and promoting the formation of reactive oxygen species (ROS, e.g. H(2)O(2)). This role is essential for symbiotic nitrogen fixation (SNF). In Phaseolus vulgaris (Kidney bean), this protein is Leghemoglobin alpha.